A 511-amino-acid polypeptide reads, in one-letter code: Sphingosine-1-phosphate transporter MFSD2B (511 aa).

The next 9 membrane-spanning stretches (helical) occupy residues Met-108–Val-128, Val-136–Pro-156, Ile-236–Val-256, Thr-280–Val-300, Asn-323–Leu-343, Leu-357–Val-377, Val-379–Val-399, Ala-415–Ile-435, and Leu-462–Tyr-482.

Belongs to the major facilitator superfamily.

Its subcellular location is the cell membrane. It catalyses the reaction sphing-4-enine 1-phosphate(in) = sphing-4-enine 1-phosphate(out). It carries out the reaction sphinganine 1-phosphate(in) = sphinganine 1-phosphate(out). The enzyme catalyses sphinga-4E,14Z-dienine-1-phosphate(in) = sphinga-4E,14Z-dienine-1-phosphate(out). Functionally, lipid transporter that specifically mediates export of sphingosine-1-phosphate in red blood cells and platelets. Sphingosine-1-phosphate is a signaling sphingolipid and its export from red blood cells into in the plasma is required for red blood cell morphology. Sphingosine-1-phosphate export from platelets is required for platelet aggregation and thrombus formation. In addition to export, also able to mediate S1P import. The chain is Sphingosine-1-phosphate transporter MFSD2B from Xenopus tropicalis (Western clawed frog).